A 361-amino-acid polypeptide reads, in one-letter code: UDP-N-acetylglucosamine--N-acetylmuramyl-(pentapeptide) pyrophosphoryl-undecaprenol N-acetylglucosamine transferase (361 aa).

UDP-N-acetyl-alpha-D-glucosamine-binding positions include 11–13 (TGG), Asn124, Arg162, Ser193, and Gln292.

This sequence belongs to the glycosyltransferase 28 family. MurG subfamily.

It is found in the cell inner membrane. The catalysed reaction is di-trans,octa-cis-undecaprenyl diphospho-N-acetyl-alpha-D-muramoyl-L-alanyl-D-glutamyl-meso-2,6-diaminopimeloyl-D-alanyl-D-alanine + UDP-N-acetyl-alpha-D-glucosamine = di-trans,octa-cis-undecaprenyl diphospho-[N-acetyl-alpha-D-glucosaminyl-(1-&gt;4)]-N-acetyl-alpha-D-muramoyl-L-alanyl-D-glutamyl-meso-2,6-diaminopimeloyl-D-alanyl-D-alanine + UDP + H(+). Its pathway is cell wall biogenesis; peptidoglycan biosynthesis. Functionally, cell wall formation. Catalyzes the transfer of a GlcNAc subunit on undecaprenyl-pyrophosphoryl-MurNAc-pentapeptide (lipid intermediate I) to form undecaprenyl-pyrophosphoryl-MurNAc-(pentapeptide)GlcNAc (lipid intermediate II). This chain is UDP-N-acetylglucosamine--N-acetylmuramyl-(pentapeptide) pyrophosphoryl-undecaprenol N-acetylglucosamine transferase, found in Elusimicrobium minutum (strain Pei191).